Reading from the N-terminus, the 105-residue chain is Translation initiation factor 1A (105 aa).

In terms of domain architecture, S1-like spans 18-92 (IRVKLPNKRI…DKCDIIYRYT (75 aa)).

The protein belongs to the eIF-1A family.

Its function is as follows. Seems to be required for maximal rate of protein biosynthesis. Enhances ribosome dissociation into subunits and stabilizes the binding of the initiator Met-tRNA(I) to 40 S ribosomal subunits. This is Translation initiation factor 1A (eIF1A) from Methanocorpusculum labreanum (strain ATCC 43576 / DSM 4855 / Z).